We begin with the raw amino-acid sequence, 310 residues long: Transcription factor RAX3 (310 aa).

2 consecutive HTH myb-type domains span residues 9 to 62 (KANV…LNYL) and 63 to 117 (RPNI…KKKL). DNA-binding regions (H-T-H motif) lie at residues 38–62 (WIAL…LNYL) and 90–113 (WSII…NTRL).

As to expression, ubiquitous.

The protein localises to the nucleus. Transcription activator. Positively regulates axillary meristems (AMs) formation and development, especially during inflorescence. This Arabidopsis thaliana (Mouse-ear cress) protein is Transcription factor RAX3 (RAX3).